Here is a 100-residue protein sequence, read N- to C-terminus: Large ribosomal subunit protein uL23 (100 aa).

The protein belongs to the universal ribosomal protein uL23 family. Part of the 50S ribosomal subunit. Contacts protein L29, and trigger factor when it is bound to the ribosome.

One of the early assembly proteins it binds 23S rRNA. One of the proteins that surrounds the polypeptide exit tunnel on the outside of the ribosome. Forms the main docking site for trigger factor binding to the ribosome. The polypeptide is Large ribosomal subunit protein uL23 (Buchnera aphidicola subsp. Schizaphis graminum (strain Sg)).